An 88-amino-acid polypeptide reads, in one-letter code: Small ribosomal subunit protein uS15 (88 aa).

It belongs to the universal ribosomal protein uS15 family. Part of the 30S ribosomal subunit. Forms a bridge to the 50S subunit in the 70S ribosome, contacting the 23S rRNA.

Its function is as follows. One of the primary rRNA binding proteins, it binds directly to 16S rRNA where it helps nucleate assembly of the platform of the 30S subunit by binding and bridging several RNA helices of the 16S rRNA. Functionally, forms an intersubunit bridge (bridge B4) with the 23S rRNA of the 50S subunit in the ribosome. The sequence is that of Small ribosomal subunit protein uS15 from Geobacter sulfurreducens (strain ATCC 51573 / DSM 12127 / PCA).